Here is a 653-residue protein sequence, read N- to C-terminus: J protein JJJ2 (653 aa).

The J domain maps to 14-78 (TLYSVLNLKY…KEKMKYDSKL (65 aa)). 2 disordered regions span residues 85-308 (DYSP…SSTE) and 490-512 (VSPKPRSVPSKTTPGSSHAEENL). Polar residues-rich tracts occupy residues 161-171 (NAKSYQNSKKS) and 187-200 (ATSFSNENRNSSSV). A compositionally biased stretch (low complexity) spans 213-241 (SGSAVGSESRISSSGSESSSNVNSATGSS). A compositionally biased stretch (polar residues) spans 298–308 (PVKTTPNSSTE).

The protein localises to the cytoplasm. The protein resides in the nucleus. This is J protein JJJ2 (JJJ2) from Kluyveromyces lactis (strain ATCC 8585 / CBS 2359 / DSM 70799 / NBRC 1267 / NRRL Y-1140 / WM37) (Yeast).